The chain runs to 95 residues: Aspartyl/glutamyl-tRNA(Asn/Gln) amidotransferase subunit C (95 aa).

This sequence belongs to the GatC family. In terms of assembly, heterotrimer of A, B and C subunits.

It catalyses the reaction L-glutamyl-tRNA(Gln) + L-glutamine + ATP + H2O = L-glutaminyl-tRNA(Gln) + L-glutamate + ADP + phosphate + H(+). It carries out the reaction L-aspartyl-tRNA(Asn) + L-glutamine + ATP + H2O = L-asparaginyl-tRNA(Asn) + L-glutamate + ADP + phosphate + 2 H(+). In terms of biological role, allows the formation of correctly charged Asn-tRNA(Asn) or Gln-tRNA(Gln) through the transamidation of misacylated Asp-tRNA(Asn) or Glu-tRNA(Gln) in organisms which lack either or both of asparaginyl-tRNA or glutaminyl-tRNA synthetases. The reaction takes place in the presence of glutamine and ATP through an activated phospho-Asp-tRNA(Asn) or phospho-Glu-tRNA(Gln). This Dinoroseobacter shibae (strain DSM 16493 / NCIMB 14021 / DFL 12) protein is Aspartyl/glutamyl-tRNA(Asn/Gln) amidotransferase subunit C.